We begin with the raw amino-acid sequence, 276 residues long: Formamidopyrimidine-DNA glycosylase (276 aa).

The Schiff-base intermediate with DNA role is filled by proline 2. Residue glutamate 3 is the Proton donor of the active site. Residue lysine 58 is the Proton donor; for beta-elimination activity of the active site. DNA-binding residues include histidine 92, arginine 111, and lysine 154. The segment at 239–273 (QVYGHVGEPCPVCGTKFEKIKVNGRGTTFCPHCQV) adopts an FPG-type zinc-finger fold. The active-site Proton donor; for delta-elimination activity is the arginine 263.

This sequence belongs to the FPG family. As to quaternary structure, monomer. Zn(2+) serves as cofactor.

The catalysed reaction is Hydrolysis of DNA containing ring-opened 7-methylguanine residues, releasing 2,6-diamino-4-hydroxy-5-(N-methyl)formamidopyrimidine.. The enzyme catalyses 2'-deoxyribonucleotide-(2'-deoxyribose 5'-phosphate)-2'-deoxyribonucleotide-DNA = a 3'-end 2'-deoxyribonucleotide-(2,3-dehydro-2,3-deoxyribose 5'-phosphate)-DNA + a 5'-end 5'-phospho-2'-deoxyribonucleoside-DNA + H(+). Its function is as follows. Involved in base excision repair of DNA damaged by oxidation or by mutagenic agents. Acts as a DNA glycosylase that recognizes and removes damaged bases. Has a preference for oxidized purines, such as 7,8-dihydro-8-oxoguanine (8-oxoG). Has AP (apurinic/apyrimidinic) lyase activity and introduces nicks in the DNA strand. Cleaves the DNA backbone by beta-delta elimination to generate a single-strand break at the site of the removed base with both 3'- and 5'-phosphates. This Lactobacillus helveticus (strain DPC 4571) protein is Formamidopyrimidine-DNA glycosylase.